The primary structure comprises 419 residues: Elongation factor Tu, chloroplastic (419 aa).

Residues 10 to 214 (KPHVNIGTIG…AVDSYIPTPK (205 aa)) form the tr-type G domain. The segment at 19 to 26 (GHVDHGKT) is G1. 19–26 (GHVDHGKT) contributes to the GTP binding site. Position 26 (Thr-26) interacts with Mg(2+). The interval 60-64 (GITIN) is G2. The segment at 81 to 84 (DCPG) is G3. GTP is bound by residues 81 to 85 (DCPGH) and 136 to 139 (NKED). A G4 region spans residues 136–139 (NKED). Residues 174–176 (SAL) form a G5 region.

It belongs to the TRAFAC class translation factor GTPase superfamily. Classic translation factor GTPase family. EF-Tu/EF-1A subfamily.

The protein localises to the plastid. Its subcellular location is the chloroplast. The enzyme catalyses GTP + H2O = GDP + phosphate + H(+). Its function is as follows. GTP hydrolase that promotes the GTP-dependent binding of aminoacyl-tRNA to the A-site of ribosomes during protein biosynthesis. In Chara vulgaris (Common stonewort), this protein is Elongation factor Tu, chloroplastic (tufA).